Here is a 299-residue protein sequence, read N- to C-terminus: Putative glycylpeptide N-tetradecanoyltransferase (299 aa).

Belongs to the NMT family.

The catalysed reaction is N-terminal glycyl-[protein] + tetradecanoyl-CoA = N-tetradecanoylglycyl-[protein] + CoA + H(+). Functionally, adds a myristoyl group to the N-terminal glycine residue of certain proteins. This is Putative glycylpeptide N-tetradecanoyltransferase from Amsacta moorei entomopoxvirus (AmEPV).